Consider the following 237-residue polypeptide: Carbonyl reductase family member 4 (237 aa).

Residues 11-14 (SRGI), 34-35 (RN), Asp-57, and 84-86 (AAG) each bind NADP(+). Ser-135 contributes to the substrate binding site. NADP(+) contacts are provided by residues Tyr-148, Lys-152, and 181–183 (IHT). The Proton acceptor role is filled by Tyr-148.

The protein belongs to the short-chain dehydrogenases/reductases (SDR) family. Homotetramer (in vitro). Heterotetramer with HSD17B8; contains two molecules each of HSD17B8 and CBR4.

The protein localises to the mitochondrion matrix. It functions in the pathway lipid metabolism; fatty acid biosynthesis. The heterotetramer with HSD17B8 has NADH-dependent 3-ketoacyl-acyl carrier protein reductase activity, and thereby plays a role in mitochondrial fatty acid biosynthesis. Within the heterotetramer, HSD17B8 binds NADH; CBR4 binds NADPD. The homotetramer has NADPH-dependent quinone reductase activity. Both homotetramer and the heterotetramer have broad in vitro substrate specificity and can reduce 9,10-phenanthrenequinone, 1,4-benzoquinone and various other o-quinones and p-quinones. In Danio rerio (Zebrafish), this protein is Carbonyl reductase family member 4 (cbr4).